A 440-amino-acid chain; its full sequence is Protein TENP (440 aa).

In terms of tissue distribution, expressed in developing retina and brain, but not in heart, liver or kidney. In brain, located in a narrow strip in the boundary between the ventricular zone (consisting of proliferating cells) and the intermediate zone (consisting of postmitotic, differentiating cells). Expressed in all major regions of the developing brain, including the myelencephalon, the mesencephalon, the telencephalon and the diencephalon. In the developing retina, expression is scattered across the retinal neural epithelium. Expressed in egg white (at protein level). Expressed in the magnum of the oviduct (at protein level).

May play a role in the developmental transition from cell proliferation to cell differentiation during neurogenesis. This chain is Protein TENP (TENP), found in Gallus gallus (Chicken).